Reading from the N-terminus, the 378-residue chain is Ribosomal RNA large subunit methyltransferase G (378 aa).

This sequence belongs to the methyltransferase superfamily. RlmG family.

The protein localises to the cytoplasm. The enzyme catalyses guanosine(1835) in 23S rRNA + S-adenosyl-L-methionine = N(2)-methylguanosine(1835) in 23S rRNA + S-adenosyl-L-homocysteine + H(+). In terms of biological role, specifically methylates the guanine in position 1835 (m2G1835) of 23S rRNA. The sequence is that of Ribosomal RNA large subunit methyltransferase G from Escherichia coli O139:H28 (strain E24377A / ETEC).